We begin with the raw amino-acid sequence, 397 residues long: Gamma tubulin complex adapter mto2 (397 aa).

The segment covering 1 to 13 (MSEHNYQSDREVA) has biased composition (basic and acidic residues). Disordered stretches follow at residues 1-44 (MSEH…WRAG), 269-298 (YTSS…PFPS), and 346-397 (RSDP…TPSP). Composition is skewed to polar residues over residues 22 to 37 (ASAN…STPR), 269 to 281 (YTSS…QRMA), 352 to 369 (RHVS…SPTS), and 382 to 397 (SPAS…TPSP). Phosphoserine occurs at positions 366 and 396.

Interacts with mto1; the interaction is direct and required for efficient binding to the gamma-tubulin complex. Interacts with gamma tubulin complex subunits alp4, alp6 and gtb1.

The protein resides in the cytoplasm. The protein localises to the cytoskeleton. Its subcellular location is the microtubule organizing center. It is found in the spindle pole body. Functionally, acts together with mto1 to promote nucleation of at least a subset of cytoplasmic microtubules, by recruiting the gamma-tubulin complex to the interphase microtubule organizing center (iMTOC) and to the equatorial MTOC (eMTOC) during anaphase. Does not appear to be required for cytoplasmic astral microtubule nucleation from the spindle pole body (SPB). Required to establish the eMTOC, and thereby to tether the cytokinetic actin ring. The polypeptide is Gamma tubulin complex adapter mto2 (Schizosaccharomyces pombe (strain 972 / ATCC 24843) (Fission yeast)).